Here is a 196-residue protein sequence, read N- to C-terminus: Probable malonic semialdehyde reductase RutE (196 aa).

Belongs to the nitroreductase family. HadB/RutE subfamily. FMN is required as a cofactor.

The catalysed reaction is 3-hydroxypropanoate + NADP(+) = 3-oxopropanoate + NADPH + H(+). May reduce toxic product malonic semialdehyde to 3-hydroxypropionic acid, which is excreted. The protein is Probable malonic semialdehyde reductase RutE of Escherichia coli O139:H28 (strain E24377A / ETEC).